A 2399-amino-acid polypeptide reads, in one-letter code: Protein DOP1A (2399 aa).

6 disordered regions span residues 556–598, 619–660, 1105–1124, 1166–1188, 1234–1263, and 1279–1308; these read PSGQ…SSES, NGQG…GAAG, SDSG…EVDP, SVTS…PGKE, SPCI…HSSI, and ETIV…KKKA. Low complexity-rich tracts occupy residues 629–647 and 1105–1116; these read GSTS…EETV and SDSGCSQSSAGD. Composition is skewed to polar residues over residues 1166-1180 and 1234-1252; these read SVTS…QTKS and SPCI…VPSE. Ser1261 carries the phosphoserine modification.

This sequence belongs to the DOP1 family.

It localises to the golgi apparatus membrane. In terms of biological role, may be involved in protein traffic between late Golgi and early endosomes. This chain is Protein DOP1A (Dop1a), found in Mus musculus (Mouse).